A 464-amino-acid chain; its full sequence is Trigger factor (464 aa).

The PPIase FKBP-type domain occupies Gly166–Pro245. Residues Phe426–Ala464 form a disordered region. Over residues Glu432–Ala455 the composition is skewed to acidic residues.

The protein belongs to the FKBP-type PPIase family. Tig subfamily.

It is found in the cytoplasm. The enzyme catalyses [protein]-peptidylproline (omega=180) = [protein]-peptidylproline (omega=0). In terms of biological role, involved in protein export. Acts as a chaperone by maintaining the newly synthesized protein in an open conformation. Functions as a peptidyl-prolyl cis-trans isomerase. The sequence is that of Trigger factor from Pseudarthrobacter chlorophenolicus (strain ATCC 700700 / DSM 12829 / CIP 107037 / JCM 12360 / KCTC 9906 / NCIMB 13794 / A6) (Arthrobacter chlorophenolicus).